We begin with the raw amino-acid sequence, 251 residues long: Developmental protein SEPALLATA 1 (251 aa).

Residues 3-57 enclose the MADS-box domain; it reads RGRVELKRIENKINRQVTFAKRRNGLLKKAYELSVLCDAEVALIIFSNRGKLYEF. Residues 85–176 are a coiled coil; it reads AKELENSYRE…ALAMKLDDMI (92 aa). One can recognise a K-box domain in the interval 88–178; it reads LENSYREYLK…AMKLDDMIGV (91 aa).

Heterodimer with AGAMOUS capable of binding to CArG-box sequences. Interacts with AGL16. Interacts with TT16/AGL32. As to expression, expressed mainly in carpels, and weakly in stamens.

The protein localises to the nucleus. In terms of biological role, probable transcription factor. Functions with SEPALLATA2/AGL4 and SEPALLATA3/AGL9 to ensure proper development of petals, stamens and carpels, and to prevent the indeterminate growth of the flower meristem. Forms a heterodimer via the K-box domain with AGAMOUS, that could be involved in genes regulation during floral meristem development. The sequence is that of Developmental protein SEPALLATA 1 (SEP1) from Arabidopsis thaliana (Mouse-ear cress).